The sequence spans 572 residues: Na(+)/citrate cotransporter (572 aa).

Transmembrane regions (helical) follow at residues 13–33 (SFAILLFTPILMLPLVILIPD), 53–73 (VIPVAVTSLLPVLLFPLLKVL), 80–100 (IQYMKDTNMLFLGSLIVAVAV), 124–144 (LMLGFMFVTAFLSMWISNTAA), 218–238 (SASIGGTATLTGTGPNVVLLG), 255–275 (SWFGFAFPNMVMMLVLAWLWL), 315–335 (SLSYPECNVLFCFTLLVILWF), and 357–377 (HITDATVAIFVAILLFIIPSQ). Asn-382 carries N-linked (GlcNAc...) asparagine glycosylation. 4 helical membrane-spanning segments follow: residues 410–430 (VPWDIVLLLGGGFAMAKGCET), 443–463 (PLRLVKPAVITLILSCLVAMT), 491–511 (PLYVMIPCTMSASLAFMLPVA), and 532–552 (TGLIMNFVGILSVFLSVNTWG). The N-linked (GlcNAc...) asparagine glycan is linked to Asn-566.

This sequence belongs to the SLC13A/DASS transporter (TC 2.A.47) family. NADC subfamily. In terms of assembly, homodimer.

It is found in the cell membrane. The catalysed reaction is citrate(out) + 4 Na(+)(out) = citrate(in) + 4 Na(+)(in). With respect to regulation, inhibited by Li(+). In terms of biological role, high-affinity sodium/citrate cotransporter that mediates citrate entry into cells, which is a critical participant of biochemical pathways. May function in various metabolic processes in which citrate has a critical role such as energy production (Krebs cycle), fatty acid synthesis, cholesterol synthesis, glycolysis, and gluconeogenesis. Transports citrate into the cell in a Na(+)-dependent manner, recognizing the trivalent form of citrate (physiological pH) rather than the divalent form. Can recognizes succinate as a substrate, but its affinity for succinate is several fold lower than for citrate. The stoichiometry is probably 4 Na(+) for each carboxylate, irrespective of whether the translocated substrate is divalent or trivalent, rendering the process electrogenic. Involved in the regulation of citrate levels in the brain. This is Na(+)/citrate cotransporter (Slc13a5) from Mus musculus (Mouse).